Here is a 424-residue protein sequence, read N- to C-terminus: CinA-like protein (424 aa).

The protein belongs to the CinA family.

The chain is CinA-like protein from Prochlorococcus marinus (strain MIT 9215).